Reading from the N-terminus, the 441-residue chain is Xylose isomerase (441 aa).

Active-site residues include His105 and Asp108. Residues Glu236, Glu272, His275, Asp300, Asp311, Asp313, and Asp343 each coordinate Mg(2+).

The protein belongs to the xylose isomerase family. In terms of assembly, homotetramer. Mg(2+) is required as a cofactor.

Its subcellular location is the cytoplasm. It catalyses the reaction alpha-D-xylose = alpha-D-xylulofuranose. The sequence is that of Xylose isomerase from Mesorhizobium japonicum (strain LMG 29417 / CECT 9101 / MAFF 303099) (Mesorhizobium loti (strain MAFF 303099)).